A 626-amino-acid polypeptide reads, in one-letter code: MMARPVDPQRSPDPTFRSSTRHSGKLEPMEATAHLLRKQCPSRLNSPAWEASGLHWSSLDSPVGSMQALRPSAQHSWSPEPSVVPDQAWEDTALHQKKLCPLSLTSLPREAAVNFSYRSQTLLQEAQVLQGSPELLPRSPKPSGLQRLAPEEATALPLRRLCHLSLMEKDLGTTAHPRGFPELSHKSTAAASSRQSRPRVRSASLPPRTRLPSGSQAPSAAHPKRLSDLLLTSRAAAPGWRSPDPRSRLAAPPLGSTTLPSTWTAPQSRLTARPSRSPEPQIRESEQRDPQLRRKQQRWKEPLMPRREEKYPLRGTDPLPPGQPQRIPLPGQPLQPQPILTPGQPQKIPTPGQHQPILTPGHSQPIPTPGQPLPPQPIPTPGRPLTPQPIPTPGRPLTPQPIQMPGRPLRLPPPLRLLRPGQPMSPQLRQTQGLPLPQPLLPPGQPKSAGRPLQPLPPGPDARSISDPPAPRSRLPIRLLRGLLARLPGGASPRAAAAAACTTMKGWPAATMTPAETSPTMGPPDASAGFSIGEIAAAESPSATYSATFSCKPSGAASVDLRVPSPKPRALSRSRRYPWRRSADRCAKKPWRSGPRSAQRRNAVSSSTNNSRTKRWATCVRTACCF.

Disordered stretches follow at residues 1-29, 173-223, 236-473, and 556-612; these read MMAR…LEPM, TTAH…AAHP, AAPG…APRS, and AASV…NNSR. Polar residues-rich tracts occupy residues 186-195 and 255-270; these read KSTAAASSRQ and GSTT…QSRL. Positions 281–312 are enriched in basic and acidic residues; that stretch reads QIRESEQRDPQLRRKQQRWKEPLMPRREEKYP. Low complexity predominate over residues 337–346; it reads QPILTPGQPQ. Residues 366–399 show a composition bias toward pro residues; that stretch reads IPTPGQPLPPQPIPTPGRPLTPQPIPTPGRPLTP. Residues 416-435 are compositionally biased toward low complexity; it reads RLLRPGQPMSPQLRQTQGLP. Positions 436 to 445 are enriched in pro residues; that stretch reads LPQPLLPPGQ. Over residues 570 to 579 the composition is skewed to basic residues; sequence ALSRSRRYPW. Residues 600–611 show a composition bias toward polar residues; it reads RRNAVSSSTNNS.

This sequence belongs to the ALEX family. In terms of assembly, interacts with the N-terminal region of the XLas isoforms of guanine nucleotide-binding protein G(s) subunit alpha.

The protein resides in the cell membrane. Its subcellular location is the cell projection. It localises to the ruffle. May inhibit the adenylyl cyclase-stimulating activity of guanine nucleotide-binding protein G(s) subunit alpha which is produced from the same locus in a different open reading frame. The chain is Protein ALEX from Homo sapiens (Human).